Reading from the N-terminus, the 44-residue chain is MANPTGNQPVSYPIFTVRWLAVHTLAVPTVFFIGAIAAMQFIQR.

A helical membrane pass occupies residues 19 to 35; the sequence is WLAVHTLAVPTVFFIGA. Heme is bound at residue histidine 23.

It belongs to the PsbE/PsbF family. As to quaternary structure, heterodimer of an alpha subunit and a beta subunit. PSII is composed of 1 copy each of membrane proteins PsbA, PsbB, PsbC, PsbD, PsbE, PsbF, PsbH, PsbI, PsbJ, PsbK, PsbL, PsbM, PsbT, PsbX, PsbY, PsbZ, Psb30/Ycf12, peripheral proteins PsbO, CyanoQ (PsbQ), PsbU, PsbV and a large number of cofactors. It forms dimeric complexes. Heme b is required as a cofactor.

It is found in the cellular thylakoid membrane. This b-type cytochrome is tightly associated with the reaction center of photosystem II (PSII). PSII is a light-driven water:plastoquinone oxidoreductase that uses light energy to abstract electrons from H(2)O, generating O(2) and a proton gradient subsequently used for ATP formation. It consists of a core antenna complex that captures photons, and an electron transfer chain that converts photonic excitation into a charge separation. This chain is Cytochrome b559 subunit beta, found in Gloeothece citriformis (strain PCC 7424) (Cyanothece sp. (strain PCC 7424)).